Consider the following 224-residue polypeptide: Serum amyloid P-component (224 aa).

Residues 1–19 (MERLLLWVSVLASLPEAFA) form the signal peptide. In terms of domain architecture, Pentraxin (PTX) spans 24 to 224 (TGKVFVFPRE…YVVIKPRVWS (201 aa)). A glycan (N-linked (GlcNAc...) asparagine) is linked at Asn-51. Cys-55 and Cys-114 are joined by a disulfide. Positions 77, 78, 155, 156, 157, and 167 each coordinate Ca(2+).

It belongs to the pentraxin family. Homopentamer. Pentraxin (or pentaxin) have a discoid arrangement of 5 non-covalently bound subunits. Requires Ca(2+) as cofactor.

The protein localises to the secreted. This is Serum amyloid P-component (APCS) from Sus scrofa (Pig).